The primary structure comprises 190 residues: Transcription factor bHLH162 (190 aa).

The segment covering 1-12 has biased composition (polar residues); the sequence is MEPSHSNTGQSR. Residues 1–21 are disordered; that stretch reads MEPSHSNTGQSRSVDRKTVEK. One can recognise a bHLH domain in the interval 11-63; it reads SRSVDRKTVEKNRRMQMKSLYSELISLLPHHSSTEPLTLPDQLDEAANYIKKL.

This sequence belongs to the bHLH protein family.

The protein resides in the nucleus. The sequence is that of Transcription factor bHLH162 from Arabidopsis thaliana (Mouse-ear cress).